The primary structure comprises 372 residues: 7-methylxanthosine synthase 1 (372 aa).

Y18 contacts S-adenosyl-L-homocysteine. Xanthosine contacts are provided by N21 and N25. The S-adenosyl-L-homocysteine site is built by C62, N67, D101, L102, S140, F141, and C157. Y158 contacts xanthosine. S-adenosyl-L-homocysteine is bound at residue C159. Xanthosine is bound by residues Q161 and W162. The Mg(2+) site is built by N179, D261, F263, and N264. Residues S316, Y321, and Y356 each coordinate xanthosine.

This sequence belongs to the methyltransferase superfamily. Type-7 methyltransferase family. Mg(2+) is required as a cofactor. Expressed in stems, young leaves, floral buds, developing endosperm and immature fruits (grains). Detected in roots and old leaves, but not in mature fruits.

It catalyses the reaction xanthosine + S-adenosyl-L-methionine = 7-methylxanthosine + S-adenosyl-L-homocysteine. Its pathway is alkaloid biosynthesis. Its function is as follows. Involved in the biosynthesis of caffeine. Specific for xanthosine and could not use xanthosine 5'-monophosphate (XMP) as substrate. Catalyzes the 7-N-methylation activity of xanthosine, but does not have 1-N- or 3-N-methylation activity. This is 7-methylxanthosine synthase 1 from Coffea arabica (Arabian coffee).